We begin with the raw amino-acid sequence, 278 residues long: Phosphatidylglycerol--prolipoprotein diacylglyceryl transferase (278 aa).

3 consecutive transmembrane segments (helical) span residues 21–41, 54–74, and 88–108; these read WYGI…QASV, IIFW…VIFQ, and IWHG…TGII. Arginine 136 contributes to the a 1,2-diacyl-sn-glycero-3-phospho-(1'-sn-glycerol) binding site. 2 helical membrane passes run 176–196 and 234–254; these read QPTF…LILL and IRVA…IMII.

Belongs to the Lgt family.

It localises to the cell membrane. It carries out the reaction L-cysteinyl-[prolipoprotein] + a 1,2-diacyl-sn-glycero-3-phospho-(1'-sn-glycerol) = an S-1,2-diacyl-sn-glyceryl-L-cysteinyl-[prolipoprotein] + sn-glycerol 1-phosphate + H(+). It functions in the pathway protein modification; lipoprotein biosynthesis (diacylglyceryl transfer). In terms of biological role, catalyzes the transfer of the diacylglyceryl group from phosphatidylglycerol to the sulfhydryl group of the N-terminal cysteine of a prolipoprotein, the first step in the formation of mature lipoproteins. The sequence is that of Phosphatidylglycerol--prolipoprotein diacylglyceryl transferase from Staphylococcus xylosus.